Consider the following 627-residue polypeptide: UvrABC system protein C (627 aa).

The GIY-YIG domain occupies 26–105; the sequence is PSPGVYQFRN…IKELKPRYNV (80 aa). The UVR domain maps to 219–254; it reads STMIRSLTSAMQLFARELKFERAAEIKMQLESLKRY.

Belongs to the UvrC family. Interacts with UvrB in an incision complex.

The protein localises to the cytoplasm. The UvrABC repair system catalyzes the recognition and processing of DNA lesions. UvrC both incises the 5' and 3' sides of the lesion. The N-terminal half is responsible for the 3' incision and the C-terminal half is responsible for the 5' incision. This chain is UvrABC system protein C, found in Pelodictyon phaeoclathratiforme (strain DSM 5477 / BU-1).